Here is a 92-residue protein sequence, read N- to C-terminus: Large ribosomal subunit protein bL27 (92 aa).

Residues 1–22 (MAHTKAGGSTRNGRDSRGQRLG) form a disordered region.

The protein belongs to the bacterial ribosomal protein bL27 family.

The protein is Large ribosomal subunit protein bL27 of Mycoplasmopsis agalactiae (strain NCTC 10123 / CIP 59.7 / PG2) (Mycoplasma agalactiae).